A 520-amino-acid polypeptide reads, in one-letter code: MECPHLSSSVCIAPDSAKFPNGSPSSWCCSVCRSNKSPWVCLTCSSVHCGRYVNGHAKKHYEDAQVPLTNHKKSEKQDKVQHTVCMDCSSYSTYCYRCDDFVVNDTKLGLVQKVREHLQNLENSAFTADRHKKRKLLENSTLNSKLLKVNGSTTAICATGLRNLGNTCFMNAILQSLSNIEQFCCYFKELPAVELRNGKTAGRRTYHTRSQGDNNVSLVEEFRKTLCALWQGSQTAFSPESLFYVVWKIMPNFRGYQQQDAHEFMRYLLDHLHLELQGGFNGVSRSAILQENSTLSASNKCCINGASTVVTAIFGGILQNEVNCLICGTESRKFDPFLDLSLDIPSQFRSKRSKNQENGPVCSLRDCLRSFTDLEELDETELYMCHKCKKKQKSTKKFWIQKLPKVLCLHLKRFHWTAYLRNKVDTYVEFPLRGLDMKCYLLEPENSGPESCLYDLAAVVVHHGSGVGSGHYTAYATHEGRWFHFNDSTVTLTDEETVVKAKAYILFYVEHQAKAGSDKL.

N-acetylmethionine is present on M1. Residues 1–121 (MECPHLSSSV…QKVREHLQNL (121 aa)) form a UBP-type zinc finger. Residues C3, H5, C29, C32, C41, C44, C49, H56, H60, H82, C95, and C98 each coordinate Zn(2+). A USP domain is found at 159–511 (TGLRNLGNTC…KAYILFYVEH (353 aa)). C168 functions as the Nucleophile in the catalytic mechanism. Catalysis depends on H471, which acts as the Proton acceptor.

It belongs to the peptidase C19 family. USP3 subfamily. Interacts (via UBP-type domain) with H2A; the interaction is less efficient than with monoubiquitinated H2A. In terms of tissue distribution, expressed in all tissues examined, with strongest expression in pancreas.

It localises to the nucleus. The protein resides in the cytoplasm. The enzyme catalyses Thiol-dependent hydrolysis of ester, thioester, amide, peptide and isopeptide bonds formed by the C-terminal Gly of ubiquitin (a 76-residue protein attached to proteins as an intracellular targeting signal).. Functionally, deubiquitinase that plays a role in several cellular processes including transcriptional regulation, cell cycle progression or innate immunity. In response to DNA damage, deubiquitinates monoubiquitinated target proteins such as histone H2A and H2AX and thereby counteracts RNF168- and RNF8-mediated ubiquitination. In turn, participates in the recruitment of DNA damage repair factors to DNA break sites. Required for proper progression through S phase and subsequent mitotic entry. Acts as a positive regulator of TP53 by deubiquitinating and stabilizing it to promote normal cell proliferation and transformation. Participates in establishing tolerance innate immune memory through non-transcriptional feedback. Mechanistically, negatively regulates TLR-induced NF-kappa-B signaling by targeting and removing the 'Lys-63'-linked polyubiquitin chains on MYD88. Negatively regulates the activation of type I interferon signaling by mediating 'Lys-63'-linked polyubiquitin chains on RIGI and IFIH1. Also deubiquinates ASC/PYCARD, the central adapter mediating the assembly and activation of most inflammasomes, and thereby promotes inflammasome activation. The protein is Ubiquitin carboxyl-terminal hydrolase 3 (USP3) of Homo sapiens (Human).